We begin with the raw amino-acid sequence, 638 residues long: Lactose permease (638 aa).

Residues methionine 1–lysine 470 are permease. Transmembrane regions (helical) follow at residues phenylalanine 27–leucine 47, isoleucine 56–isoleucine 76, tryptophan 94–phenylalanine 114, tryptophan 121–leucine 141, leucine 166–valine 186, tryptophan 204–phenylalanine 224, leucine 261–tyrosine 281, phenylalanine 291–valine 311, tryptophan 320–histidine 340, valine 343–valine 363, phenylalanine 395–glycine 415, and threonine 429–phenylalanine 449. Residues serine 503–glutamine 610 form the PTS EIIA type-1 domain. Phosphohistidine; by HPr is present on histidine 558.

The protein in the N-terminal section; belongs to the sodium:galactoside symporter (TC 2.A.2) family.

The protein resides in the cell membrane. Functionally, responsible for transport of beta-galactosides into the cell, with the concomitant uptake of protons (symport system), and also for transport of homologous and heterologous exchange of beta-galactosides. The chain is Lactose permease (lacS) from Lactobacillus helveticus (Lactobacillus suntoryeus).